The chain runs to 439 residues: Telomeric repeat-binding factor 1 (439 aa).

A disordered region spans residues 1-36 (MAEDVSSAAPSPRGCADGRDADPTEEQMAETERNDE). A2 carries the post-translational modification N-acetylalanine. Phosphoserine is present on S11. The segment covering 23–36 (PTEEQMAETERNDE) has biased composition (acidic residues). The interval 58–268 (EEEEEDAGLV…AAAKVVESKR (211 aa)) is TRFH mediates dimerization. K213 is covalently cross-linked (Glycyl lysine isopeptide (Lys-Gly) (interchain with G-Cter in SUMO2)). S219 is modified (phosphoserine; by ATM). The segment at 265-378 (ESKRTRTITS…PVTPEKHRAR (114 aa)) is interaction with RLIM. The disordered stretch occupies residues 266 to 311 (SKRTRTITSQDKPSGNDVEMETEANLDTRKSVSDKQSAVTESSEGT). A compositionally biased stretch (polar residues) spans 299 to 311 (DKQSAVTESSEGT). Residue K325 forms a Glycyl lysine isopeptide (Lys-Gly) (interchain with G-Cter in SUMO2) linkage. The interval 326-375 (LQHGTQQQDLNKKERRVGTPQSTKKKKESRRATESRIPVSKSQPVTPEKH) is disordered. Residues 337-356 (KKERRVGTPQSTKKKKESRR) carry the Nuclear localization signal motif. K366 is covalently cross-linked (Glycyl lysine isopeptide (Lys-Gly) (interchain with G-Cter in SUMO2)). The region spanning 375-432 (HRARKRQAWLWEEDKNLRSGVRKYGEGNWSKILLHYKFNNRTSVMLKDRWRTMKKLKL) is the HTH myb-type domain. The H-T-H motif DNA-binding region spans 403–428 (WSKILLHYKFNNRTSVMLKDRWRTMK).

As to quaternary structure, homodimer; can contain both isoforms. Found in a complex with POT1; TINF2 and TNKS1. Interacts with ATM, TINF2, TNKS1, TNKS2, PINX1, NEK2 and MAPRE1. Component of the shelterin complex (telosome) composed of TERF1, TERF2, TINF2, TERF2IP ACD and POT1. Interacts with RLIM (via N-terminus). Interacts with FBXO4. Interaction with TINF2 protects against interaction with FBXO4 and subsequent polyubiquitination and proteasomal degradation. Interacts with GNL3L; this interaction promotes homodimerization. Interacts with TIN2. Interacts with RTEL1. Interactions with GNL3L and TIN2 are mutually exclusive. Interacts with CCDC79/TERB1. Interacts with TRIOBP isoform 1; mediates TERF1 localization to the centrosome. Phosphorylated preferentially on Ser-219 in an ATM-dependent manner in response to ionizing DNA damage. In terms of processing, ADP-ribosylation by TNKS1 or TNKS2 diminishes its ability to bind to telomeric DNA. Post-translationally, ubiquitinated by RLIM/RNF12, leading to its degradation by the proteasome. Ubiquitinated by a SCF (SKP1-CUL1-F-box protein) ubiquitin-protein ligase complex, leading to its degradation by the proteasome. As to expression, highly expressed and ubiquitous. Isoform Pin2 predominates.

The protein localises to the nucleus. It localises to the cytoplasm. Its subcellular location is the cytoskeleton. The protein resides in the spindle. It is found in the chromosome. The protein localises to the telomere. Its function is as follows. Binds the telomeric double-stranded 5'-TTAGGG-3' repeat and negatively regulates telomere length. Involved in the regulation of the mitotic spindle. Component of the shelterin complex (telosome) that is involved in the regulation of telomere length and protection. Shelterin associates with arrays of double-stranded 5'-TTAGGG-3' repeats added by telomerase and protects chromosome ends; without its protective activity, telomeres are no longer hidden from the DNA damage surveillance and chromosome ends are inappropriately processed by DNA repair pathways. The chain is Telomeric repeat-binding factor 1 (TERF1) from Homo sapiens (Human).